The primary structure comprises 152 residues: 6,7-dimethyl-8-ribityllumazine synthase (152 aa).

5-amino-6-(D-ribitylamino)uracil is bound by residues phenylalanine 22, 54–56, and 78–80; these read AFE and AVI. 83–84 is a (2S)-2-hydroxy-3-oxobutyl phosphate binding site; it reads ET. Catalysis depends on histidine 86, which acts as the Proton donor. Phenylalanine 111 is a 5-amino-6-(D-ribitylamino)uracil binding site. Arginine 125 lines the (2S)-2-hydroxy-3-oxobutyl phosphate pocket.

Belongs to the DMRL synthase family.

It carries out the reaction (2S)-2-hydroxy-3-oxobutyl phosphate + 5-amino-6-(D-ribitylamino)uracil = 6,7-dimethyl-8-(1-D-ribityl)lumazine + phosphate + 2 H2O + H(+). Its pathway is cofactor biosynthesis; riboflavin biosynthesis; riboflavin from 2-hydroxy-3-oxobutyl phosphate and 5-amino-6-(D-ribitylamino)uracil: step 1/2. Functionally, catalyzes the formation of 6,7-dimethyl-8-ribityllumazine by condensation of 5-amino-6-(D-ribitylamino)uracil with 3,4-dihydroxy-2-butanone 4-phosphate. This is the penultimate step in the biosynthesis of riboflavin. The polypeptide is 6,7-dimethyl-8-ribityllumazine synthase (Limosilactobacillus reuteri (strain DSM 20016) (Lactobacillus reuteri)).